Reading from the N-terminus, the 367-residue chain is Ribosomal RNA large subunit methyltransferase M (367 aa).

S-adenosyl-L-methionine-binding positions include Ser-188, 221-224, Asp-240, Asp-260, and Asp-277; that span reads CPGG. The active-site Proton acceptor is the Lys-306.

Belongs to the class I-like SAM-binding methyltransferase superfamily. RNA methyltransferase RlmE family. RlmM subfamily. In terms of assembly, monomer.

It localises to the cytoplasm. The enzyme catalyses cytidine(2498) in 23S rRNA + S-adenosyl-L-methionine = 2'-O-methylcytidine(2498) in 23S rRNA + S-adenosyl-L-homocysteine + H(+). Catalyzes the 2'-O-methylation at nucleotide C2498 in 23S rRNA. In Serratia proteamaculans (strain 568), this protein is Ribosomal RNA large subunit methyltransferase M.